The following is a 2422-amino-acid chain: Non-reducing polyketide synthase trt4 (2422 aa).

The interval 14–196 (VLFGPKCPKT…HHSDHTSVVQ (183 aa)) is N-terminal acylcarrier protein transacylase domain (SAT). The interval 289–314 (VEPPDSHHNTNTTQDSDVTTNASPLT) is disordered. Positions 297–312 (NTNTTQDSDVTTNASP) are enriched in polar residues. Residues 329–745 (TVPIAVTGMA…GSNAAIVLQE (417 aa)) enclose the Ketosynthase family 3 (KS3) domain. Active-site for beta-ketoacyl synthase activity residues include Cys494, His629, and His668. The tract at residues 856 to 1121 (LCFGGQTGNT…CPIDLSGPQA (266 aa)) is malonyl-CoA:ACP transacylase (MAT) domain. Ser904 functions as the For acyl/malonyl transferase activity in the catalytic mechanism. The interval 1190 to 1316 (PSLVKLLNND…GKISISSEAN (127 aa)) is N-terminal hotdog fold. The 306-residue stretch at 1190–1495 (PSLVKLLNND…FTCVSIQSLK (306 aa)) folds into the PKS/mFAS DH domain. Positions 1191–1494 (SLVKLLNNDG…TFTCVSIQSL (304 aa)) are product template (PT) domain. His1221 acts as the Proton acceptor; for dehydratase activity in catalysis. A C-terminal hotdog fold region spans residues 1345–1495 (SSGLKRSTVY…FTCVSIQSLK (151 aa)). Catalysis depends on Asp1402, which acts as the Proton donor; for dehydratase activity. The region spanning 1535-1612 (SRSEDGLRVV…GLVQRIFPGG (78 aa)) is the Carrier domain. The residue at position 1572 (Ser1572) is an O-(pantetheine 4'-phosphoryl)serine. The disordered stretch occupies residues 1615 to 1636 (AHVETHSQPPDKIGITTGDRMP). Residues 1774-2007 (QHASEHKLLH…GFNWVDWTDN (234 aa)) are methyltransferase (CMeT) domain. Residues 2036 to 2383 (NAVAEETLVY…LAPHIPTDEY (348 aa)) form a thioesterase (TE) domain region. Catalysis depends on for thioesterase activity residues Ser2159, Asp2320, and His2352.

The enzyme catalyses 3 malonyl-CoA + acetyl-CoA + 2 S-adenosyl-L-methionine = 3,5-dimethylorsellinate + 2 S-adenosyl-L-homocysteine + 3 CO2 + 4 CoA. Its pathway is secondary metabolite biosynthesis; terpenoid biosynthesis. Functionally, non-reducing polyketide synthase; part of the gene cluster that mediates the biosynthesis of terretonin, a fungal meroterpenoid that acts as a mycotoxin. The first step of the pathway is the synthesis of 3,5-dimethylorsellinic acid (DMOA) by the polyketide synthase trt4. DMOA is then prenylated into farnesyl-DMOA by the polyprenyl transferase trt2. Methylation by the methyltransferase trt5 then leads to farnesyl-DMOA methyl ester which is further subject to epoxidation by the FAD-dependent monooxygenase trt8 to yield epoxyfarnesyl-DMOA methyl ester. Cyclization of epoxyfarnesyl-DMOA methyl ester by the terpene cyclase trt1 leads to a tetracycle intermediate which is in turn converted to preterretonin. Dehydrogenase trt9 comes next to transform preterretonin to preterrenoid. The FAD-dependent monooxygenase trt3 is then required for the C-hydroxylation at C16 of preterrenoid to yield terrenoid. The cytochrome P450 trt6 catalyzes three successive oxidations to transform terrenoid into an unstable intermediate, which then undergoes the D-ring expansion and unusual rearrangement of the methoxy group to afford the core skeleton of terretonin. Trt14 catalyzes the D-ring expansion of terretonin involving intramolecular methoxy rearrangement as well as the hydrolysis of the expanded D-ring and the methyl ester moiety. Finally, the nonheme iron-dependent dioxygenase trt7 accomplishes the last two oxidation reactions steps to complete the biosynthesis of terretonin. Terretonin C is produced via spontaneous decarboxylation of the terretonin precursor. Another shunt product of the terretonin biosynthesis is dihydrofarnesyl-DMOA, derived from epoxyfarnesyl-DMOA through hydrolysis of the epoxide. This chain is Non-reducing polyketide synthase trt4, found in Aspergillus terreus (strain NIH 2624 / FGSC A1156).